The sequence spans 283 residues: Diaminopimelate epimerase (283 aa).

The substrate site is built by N13 and N66. The active-site Proton donor is the C75. Residues 76–77 (GN), N165, N198, and 216–217 (ER) each bind substrate. Catalysis depends on C225, which acts as the Proton acceptor. Substrate is bound at residue 226 to 227 (GT).

This sequence belongs to the diaminopimelate epimerase family. In terms of assembly, homodimer.

It localises to the cytoplasm. It carries out the reaction (2S,6S)-2,6-diaminopimelate = meso-2,6-diaminopimelate. It functions in the pathway amino-acid biosynthesis; L-lysine biosynthesis via DAP pathway; DL-2,6-diaminopimelate from LL-2,6-diaminopimelate: step 1/1. Functionally, catalyzes the stereoinversion of LL-2,6-diaminopimelate (L,L-DAP) to meso-diaminopimelate (meso-DAP), a precursor of L-lysine and an essential component of the bacterial peptidoglycan. The protein is Diaminopimelate epimerase of Acaryochloris marina (strain MBIC 11017).